Here is a 205-residue protein sequence, read N- to C-terminus: Ephrin-A1 (205 aa).

An N-terminal signal peptide occupies residues Met-1–Ala-18. In terms of domain architecture, Ephrin RBD spans Asn-19 to Ile-151. A glycan (N-linked (GlcNAc...) asparagine) is linked at Asn-26. Cystine bridges form between Cys-51-Cys-92 and Cys-80-Cys-140. Ser-182 carries GPI-anchor amidated serine lipidation. The propeptide at Ala-183–Pro-205 is removed in mature form.

This sequence belongs to the ephrin family. As to quaternary structure, monomer. Homodimer. Forms heterodimers with EPHA2. Binds to the receptor tyrosine kinases EPHA2, EPHA3, EPHA4, EPHA5, EPHA6 and EPHA7. Also binds with low affinity to EPHA1. Undergoes proteolysis by a metalloprotease to give rise to a soluble monomeric form. In terms of processing, N-Glycosylation is required for binding to EPHA2 receptor and inducing its internalization.

The protein resides in the cell membrane. Its subcellular location is the secreted. Its function is as follows. Cell surface GPI-bound ligand for Eph receptors, a family of receptor tyrosine kinases which are crucial for migration, repulsion and adhesion during neuronal, vascular and epithelial development. Binds promiscuously Eph receptors residing on adjacent cells, leading to contact-dependent bidirectional signaling into neighboring cells. Plays an important role in angiogenesis and tumor neovascularization. The recruitment of VAV2, VAV3 and PI3-kinase p85 subunit by phosphorylated EPHA2 is critical for EFNA1-induced RAC1 GTPase activation and vascular endothelial cell migration and assembly. Exerts anti-oncogenic effects in tumor cells through activation and down-regulation of EPHA2. Activates EPHA2 by inducing tyrosine phosphorylation which leads to its internalization and degradation. Acts as a negative regulator in the tumorigenesis of gliomas by down-regulating EPHA2 and FAK. Can evoke collapse of embryonic neuronal growth cone and regulates dendritic spine morphogenesis. The protein is Ephrin-A1 (EFNA1) of Bos taurus (Bovine).